A 51-amino-acid chain; its full sequence is uncharacterized protein (51 aa).

Positions 3–30 (EEKAVSLAKEIIELDIKRDEMLETFMQL) form a coiled coil.

This is an uncharacterized protein from Bacillus subtilis (strain 168).